The primary structure comprises 244 residues: Probable transcriptional regulatory protein DMR_30850 (244 aa).

Belongs to the TACO1 family.

It is found in the cytoplasm. The sequence is that of Probable transcriptional regulatory protein DMR_30850 from Solidesulfovibrio magneticus (strain ATCC 700980 / DSM 13731 / RS-1) (Desulfovibrio magneticus).